A 104-amino-acid chain; its full sequence is Large ribosomal subunit protein bL21 (104 aa).

It belongs to the bacterial ribosomal protein bL21 family. Part of the 50S ribosomal subunit. Contacts protein L20.

This protein binds to 23S rRNA in the presence of protein L20. The polypeptide is Large ribosomal subunit protein bL21 (Desulfosudis oleivorans (strain DSM 6200 / JCM 39069 / Hxd3) (Desulfococcus oleovorans)).